Reading from the N-terminus, the 156-residue chain is Arginine repressor (156 aa).

Belongs to the ArgR family.

It is found in the cytoplasm. The protein operates within amino-acid biosynthesis; L-arginine biosynthesis [regulation]. In terms of biological role, regulates arginine biosynthesis genes. This Shewanella halifaxensis (strain HAW-EB4) protein is Arginine repressor.